A 150-amino-acid polypeptide reads, in one-letter code: 3-hydroxyacyl-[acyl-carrier-protein] dehydratase FabZ (150 aa).

Histidine 51 is an active-site residue.

This sequence belongs to the thioester dehydratase family. FabZ subfamily.

Its subcellular location is the cytoplasm. It catalyses the reaction a (3R)-hydroxyacyl-[ACP] = a (2E)-enoyl-[ACP] + H2O. In terms of biological role, involved in unsaturated fatty acids biosynthesis. Catalyzes the dehydration of short chain beta-hydroxyacyl-ACPs and long chain saturated and unsaturated beta-hydroxyacyl-ACPs. The sequence is that of 3-hydroxyacyl-[acyl-carrier-protein] dehydratase FabZ from Legionella pneumophila (strain Lens).